The chain runs to 105 residues: Large ribosomal subunit protein bL21 (105 aa).

The protein belongs to the bacterial ribosomal protein bL21 family. Part of the 50S ribosomal subunit. Contacts protein L20.

This protein binds to 23S rRNA in the presence of protein L20. This is Large ribosomal subunit protein bL21 from Methylobacterium sp. (strain 4-46).